The chain runs to 296 residues: NADH-cytochrome b5 reductase 2 (296 aa).

The helical transmembrane segment at 12–29 (LPIALGVGAASIATAIIL) threads the bilayer. The 105-residue stretch at 47–151 (NEWIDLPIIK…KGPITKWEWK (105 aa)) folds into the FAD-binding FR-type domain. Residue 154–189 (SYDSITLLGAGTGINPLYQLVHHIAENPEDNTKIHL) participates in FAD binding.

It belongs to the flavoprotein pyridine nucleotide cytochrome reductase family. Requires FAD as cofactor.

It localises to the mitochondrion outer membrane. The enzyme catalyses 2 Fe(III)-[cytochrome b5] + NADH = 2 Fe(II)-[cytochrome b5] + NAD(+) + H(+). May mediate the reduction of outer membrane cytochrome b5. The polypeptide is NADH-cytochrome b5 reductase 2 (MCR1) (Kluyveromyces lactis (strain ATCC 8585 / CBS 2359 / DSM 70799 / NBRC 1267 / NRRL Y-1140 / WM37) (Yeast)).